We begin with the raw amino-acid sequence, 227 residues long: NAD(P)H-quinone oxidoreductase subunit K, chloroplastic (227 aa).

Positions 43, 44, 108, and 139 each coordinate [4Fe-4S] cluster.

It belongs to the complex I 20 kDa subunit family. NDH is composed of at least 16 different subunits, 5 of which are encoded in the nucleus. The cofactor is [4Fe-4S] cluster.

It localises to the plastid. The protein resides in the chloroplast thylakoid membrane. It catalyses the reaction a plastoquinone + NADH + (n+1) H(+)(in) = a plastoquinol + NAD(+) + n H(+)(out). It carries out the reaction a plastoquinone + NADPH + (n+1) H(+)(in) = a plastoquinol + NADP(+) + n H(+)(out). NDH shuttles electrons from NAD(P)H:plastoquinone, via FMN and iron-sulfur (Fe-S) centers, to quinones in the photosynthetic chain and possibly in a chloroplast respiratory chain. The immediate electron acceptor for the enzyme in this species is believed to be plastoquinone. Couples the redox reaction to proton translocation, and thus conserves the redox energy in a proton gradient. The protein is NAD(P)H-quinone oxidoreductase subunit K, chloroplastic of Drimys granadensis.